We begin with the raw amino-acid sequence, 364 residues long: UDP-N-acetylglucosamine--N-acetylmuramyl-(pentapeptide) pyrophosphoryl-undecaprenol N-acetylglucosamine transferase 1 (364 aa).

Residues 10-12 (TGG), Asn124, Ser195, Ile250, and Gln295 each bind UDP-N-acetyl-alpha-D-glucosamine.

Belongs to the glycosyltransferase 28 family. MurG subfamily.

Its subcellular location is the cell membrane. It carries out the reaction di-trans,octa-cis-undecaprenyl diphospho-N-acetyl-alpha-D-muramoyl-L-alanyl-D-glutamyl-meso-2,6-diaminopimeloyl-D-alanyl-D-alanine + UDP-N-acetyl-alpha-D-glucosamine = di-trans,octa-cis-undecaprenyl diphospho-[N-acetyl-alpha-D-glucosaminyl-(1-&gt;4)]-N-acetyl-alpha-D-muramoyl-L-alanyl-D-glutamyl-meso-2,6-diaminopimeloyl-D-alanyl-D-alanine + UDP + H(+). Its pathway is cell wall biogenesis; peptidoglycan biosynthesis. In terms of biological role, cell wall formation. Catalyzes the transfer of a GlcNAc subunit on undecaprenyl-pyrophosphoryl-MurNAc-pentapeptide (lipid intermediate I) to form undecaprenyl-pyrophosphoryl-MurNAc-(pentapeptide)GlcNAc (lipid intermediate II). This chain is UDP-N-acetylglucosamine--N-acetylmuramyl-(pentapeptide) pyrophosphoryl-undecaprenol N-acetylglucosamine transferase 1, found in Bacillus thuringiensis subsp. konkukian (strain 97-27).